Here is a 725-residue protein sequence, read N- to C-terminus: Phosphoribosylformylglycinamidine synthase subunit PurL (725 aa).

H34 is an active-site residue. Y37 is an ATP binding site. Residue E93 participates in Mg(2+) binding. Residues 94–97 and R116 contribute to the substrate site; that span reads SHNH. Catalysis depends on H95, which acts as the Proton acceptor. D117 contacts Mg(2+). The segment at 220-241 is disordered; the sequence is GASFASEDLSEDAETEDRPAVQ. Q241 lines the substrate pocket. Residue D269 coordinates Mg(2+). Position 313 to 315 (313 to 315) interacts with substrate; that stretch reads ESQ. ATP is bound by residues D489 and G526. Position 527 (N527) interacts with Mg(2+). S529 contributes to the substrate binding site.

It belongs to the FGAMS family. As to quaternary structure, monomer. Part of the FGAM synthase complex composed of 1 PurL, 1 PurQ and 2 PurS subunits.

It localises to the cytoplasm. The catalysed reaction is N(2)-formyl-N(1)-(5-phospho-beta-D-ribosyl)glycinamide + L-glutamine + ATP + H2O = 2-formamido-N(1)-(5-O-phospho-beta-D-ribosyl)acetamidine + L-glutamate + ADP + phosphate + H(+). It functions in the pathway purine metabolism; IMP biosynthesis via de novo pathway; 5-amino-1-(5-phospho-D-ribosyl)imidazole from N(2)-formyl-N(1)-(5-phospho-D-ribosyl)glycinamide: step 1/2. Its function is as follows. Part of the phosphoribosylformylglycinamidine synthase complex involved in the purines biosynthetic pathway. Catalyzes the ATP-dependent conversion of formylglycinamide ribonucleotide (FGAR) and glutamine to yield formylglycinamidine ribonucleotide (FGAM) and glutamate. The FGAM synthase complex is composed of three subunits. PurQ produces an ammonia molecule by converting glutamine to glutamate. PurL transfers the ammonia molecule to FGAR to form FGAM in an ATP-dependent manner. PurS interacts with PurQ and PurL and is thought to assist in the transfer of the ammonia molecule from PurQ to PurL. The chain is Phosphoribosylformylglycinamidine synthase subunit PurL from Haloquadratum walsbyi (strain DSM 16790 / HBSQ001).